The sequence spans 58 residues: UPF0391 membrane protein Sbal_1421 (58 aa).

2 helical membrane passes run 6 to 26 (LVFL…IAGA) and 28 to 48 (AGIA…SLLV).

Belongs to the UPF0391 family.

It is found in the cell membrane. The sequence is that of UPF0391 membrane protein Sbal_1421 from Shewanella baltica (strain OS155 / ATCC BAA-1091).